Consider the following 276-residue polypeptide: Diaminopimelate epimerase (276 aa).

Substrate-binding residues include N13, Q46, and N66. C75 (proton donor) is an active-site residue. Substrate contacts are provided by residues 76–77 (GN), N159, N192, and 210–211 (ER). C219 functions as the Proton acceptor in the catalytic mechanism. 220–221 (GS) contributes to the substrate binding site.

Belongs to the diaminopimelate epimerase family. Homodimer.

It localises to the cytoplasm. The catalysed reaction is (2S,6S)-2,6-diaminopimelate = meso-2,6-diaminopimelate. It participates in amino-acid biosynthesis; L-lysine biosynthesis via DAP pathway; DL-2,6-diaminopimelate from LL-2,6-diaminopimelate: step 1/1. Catalyzes the stereoinversion of LL-2,6-diaminopimelate (L,L-DAP) to meso-diaminopimelate (meso-DAP), a precursor of L-lysine and an essential component of the bacterial peptidoglycan. The polypeptide is Diaminopimelate epimerase (Vibrio campbellii (strain ATCC BAA-1116)).